The following is a 218-amino-acid chain: Ras-related protein RabO (218 aa).

15-22 (GDYCVGKT) is a binding site for GTP. Residues 37–45 (RNCNIGVDF) carry the Effector region motif. GTP contacts are provided by residues 63–67 (DTGGQ) and 122–125 (NKID). C215 carries the cysteine methyl ester modification. C215 carries S-geranylgeranyl cysteine lipidation. The propeptide at 216–218 (FIL) is removed in mature form.

This sequence belongs to the small GTPase superfamily. Rab family.

The protein localises to the cell membrane. The protein is Ras-related protein RabO (rabO) of Dictyostelium discoideum (Social amoeba).